A 941-amino-acid polypeptide reads, in one-letter code: Bifunctional glutamine synthetase adenylyltransferase/adenylyl-removing enzyme (941 aa).

Positions 1-437 are adenylyl removase; it reads MPMPTVSMSP…AAEFAELLAP (437 aa). An adenylyl transferase region spans residues 444–941; that stretch reads PDALADYWRA…FPLGKDETAL (498 aa).

This sequence belongs to the GlnE family. It depends on Mg(2+) as a cofactor.

It carries out the reaction [glutamine synthetase]-O(4)-(5'-adenylyl)-L-tyrosine + phosphate = [glutamine synthetase]-L-tyrosine + ADP. It catalyses the reaction [glutamine synthetase]-L-tyrosine + ATP = [glutamine synthetase]-O(4)-(5'-adenylyl)-L-tyrosine + diphosphate. Its function is as follows. Involved in the regulation of glutamine synthetase GlnA, a key enzyme in the process to assimilate ammonia. When cellular nitrogen levels are high, the C-terminal adenylyl transferase (AT) inactivates GlnA by covalent transfer of an adenylyl group from ATP to specific tyrosine residue of GlnA, thus reducing its activity. Conversely, when nitrogen levels are low, the N-terminal adenylyl removase (AR) activates GlnA by removing the adenylyl group by phosphorolysis, increasing its activity. The regulatory region of GlnE binds the signal transduction protein PII (GlnB) which indicates the nitrogen status of the cell. This chain is Bifunctional glutamine synthetase adenylyltransferase/adenylyl-removing enzyme, found in Xanthomonas axonopodis pv. citri (strain 306).